Consider the following 199-residue polypeptide: Protein GrpE (199 aa).

The span at 1–24 shows a compositional bias: basic and acidic residues; sequence MSKQNKKDWKKFKDEHKEEHKVEN. A disordered region spans residues 1–47; that stretch reads MSKQNKKDWKKFKDEHKEEHKVENEILEEEIDEKSQHQEPALGHPSY.

The protein belongs to the GrpE family. As to quaternary structure, homodimer.

Its subcellular location is the cytoplasm. In terms of biological role, participates actively in the response to hyperosmotic and heat shock by preventing the aggregation of stress-denatured proteins, in association with DnaK and GrpE. It is the nucleotide exchange factor for DnaK and may function as a thermosensor. Unfolded proteins bind initially to DnaJ; upon interaction with the DnaJ-bound protein, DnaK hydrolyzes its bound ATP, resulting in the formation of a stable complex. GrpE releases ADP from DnaK; ATP binding to DnaK triggers the release of the substrate protein, thus completing the reaction cycle. Several rounds of ATP-dependent interactions between DnaJ, DnaK and GrpE are required for fully efficient folding. The protein is Protein GrpE of Legionella pneumophila (strain Paris).